Consider the following 235-residue polypeptide: Putative uridine kinase C227.14 (235 aa).

36–43 contacts ATP; sequence GGPGSGKS.

It belongs to the uridine kinase family.

The protein resides in the cytoplasm. It is found in the nucleus. The catalysed reaction is uridine + ATP = UMP + ADP + H(+). It carries out the reaction cytidine + ATP = CMP + ADP + H(+). Its pathway is pyrimidine metabolism; CTP biosynthesis via salvage pathway; CTP from cytidine: step 1/3. The protein operates within pyrimidine metabolism; UMP biosynthesis via salvage pathway; UMP from uridine: step 1/1. The protein is Putative uridine kinase C227.14 of Schizosaccharomyces pombe (strain 972 / ATCC 24843) (Fission yeast).